The sequence spans 353 residues: Protein RecA (353 aa).

ATP is bound at residue 67-74 (GPESSGKT).

This sequence belongs to the RecA family.

It localises to the cytoplasm. Functionally, can catalyze the hydrolysis of ATP in the presence of single-stranded DNA, the ATP-dependent uptake of single-stranded DNA by duplex DNA, and the ATP-dependent hybridization of homologous single-stranded DNAs. It interacts with LexA causing its activation and leading to its autocatalytic cleavage. The protein is Protein RecA of Chlamydia pneumoniae (Chlamydophila pneumoniae).